The primary structure comprises 389 residues: UDP-N-acetylglucosamine--N-acetylmuramyl-(pentapeptide) pyrophosphoryl-undecaprenol N-acetylglucosamine transferase (389 aa).

Residues 39-41 (TGG), asparagine 157, arginine 193, serine 221, isoleucine 275, 294-299 (ALTVSE), and glutamine 320 contribute to the UDP-N-acetyl-alpha-D-glucosamine site.

It belongs to the glycosyltransferase 28 family. MurG subfamily.

It localises to the cell inner membrane. It carries out the reaction di-trans,octa-cis-undecaprenyl diphospho-N-acetyl-alpha-D-muramoyl-L-alanyl-D-glutamyl-meso-2,6-diaminopimeloyl-D-alanyl-D-alanine + UDP-N-acetyl-alpha-D-glucosamine = di-trans,octa-cis-undecaprenyl diphospho-[N-acetyl-alpha-D-glucosaminyl-(1-&gt;4)]-N-acetyl-alpha-D-muramoyl-L-alanyl-D-glutamyl-meso-2,6-diaminopimeloyl-D-alanyl-D-alanine + UDP + H(+). It functions in the pathway cell wall biogenesis; peptidoglycan biosynthesis. Its function is as follows. Cell wall formation. Catalyzes the transfer of a GlcNAc subunit on undecaprenyl-pyrophosphoryl-MurNAc-pentapeptide (lipid intermediate I) to form undecaprenyl-pyrophosphoryl-MurNAc-(pentapeptide)GlcNAc (lipid intermediate II). This Saccharophagus degradans (strain 2-40 / ATCC 43961 / DSM 17024) protein is UDP-N-acetylglucosamine--N-acetylmuramyl-(pentapeptide) pyrophosphoryl-undecaprenol N-acetylglucosamine transferase.